The chain runs to 94 residues: Co-chaperonin GroES (94 aa).

It belongs to the GroES chaperonin family. As to quaternary structure, heptamer of 7 subunits arranged in a ring. Interacts with the chaperonin GroEL.

The protein resides in the cytoplasm. In terms of biological role, together with the chaperonin GroEL, plays an essential role in assisting protein folding. The GroEL-GroES system forms a nano-cage that allows encapsulation of the non-native substrate proteins and provides a physical environment optimized to promote and accelerate protein folding. GroES binds to the apical surface of the GroEL ring, thereby capping the opening of the GroEL channel. In Ehrlichia ruminantium (strain Gardel), this protein is Co-chaperonin GroES.